Reading from the N-terminus, the 189-residue chain is Interferon alpha-14 (189 aa).

A signal peptide spans 1–23 (MALPFALMMALVVLSCKSSCSLG). Disulfide bonds link Cys24–Cys122 and Cys52–Cys162. Residue Asn95 is glycosylated (N-linked (GlcNAc...) asparagine).

Belongs to the alpha/beta interferon family.

Its subcellular location is the secreted. In terms of biological role, produced by macrophages, IFN-alpha have antiviral activities. Interferon stimulates the production of two enzymes: a protein kinase and an oligoadenylate synthetase. The protein is Interferon alpha-14 (IFNA14) of Homo sapiens (Human).